Consider the following 418-residue polypeptide: STE20-related kinase adapter protein beta (418 aa).

The Protein kinase domain occupies 58 to 369 (YELQVEIGRG…ASSLLSHVFF (312 aa)). Residues 64-72 (IGRGFDNLT) and K89 contribute to the ATP site.

It belongs to the protein kinase superfamily. STE Ser/Thr protein kinase family. STE20 subfamily. In terms of assembly, component of a trimeric complex composed of STK11/LKB1, STRAD (STRADA or STRADB) and CAB39/MO25 (CAB39/MO25alpha or CAB39L/MO25beta): the complex tethers STK11/LKB1 in the cytoplasm and stimulates its catalytic activity. Interacts with BIRC4/XIAP. These two proteins are likely to coexist in a complex with TAK1, TRAF6, TAB1 and TAB2.

It localises to the nucleus. It is found in the cytoplasm. Functionally, pseudokinase which, in complex with CAB39/MO25 (CAB39/MO25alpha or CAB39L/MO25beta), binds to and activates STK11/LKB1. Adopts a closed conformation typical of active protein kinases and binds STK11/LKB1 as a pseudosubstrate, promoting conformational change of STK11/LKB1 in an active conformation. The chain is STE20-related kinase adapter protein beta (Stradb) from Mus musculus (Mouse).